Here is a 1820-residue protein sequence, read N- to C-terminus: Cation channel sperm-associated targeting subunit tau (1820 aa).

One can recognise a C2 domain in the interval 87 to 222; sequence DSEELEITQE…QKGCFIEEVQ (136 aa). Disordered regions lie at residues 360–383, 403–443, 695–722, and 838–857; these read SEETNIDEASENTKSNHPEEELEN, LLDN…TEVH, EVSMNSEAREKSSSPLLSIHDKSSSSME, and SSTKKKHLISEVPNSKSGSS. Residues 415-443 are compositionally biased toward polar residues; the sequence is PTLNQSDQDNSTADASKNDESTPSPTEVH.

Component of the CatSper complex or CatSpermasome composed of the core pore-forming members CATSPER1, CATSPER2, CATSPER3 and CATSPER4 as well as auxiliary members CATSPERB, CATSPERG, CATSPERD, CATSPERE, CATSPERZ, C2CD6/CATSPERT, TMEM249, TMEM262 and EFCAB9. HSPA1 may be an additional auxiliary complex member. The core complex members CATSPER1, CATSPER2, CATSPER3 and CATSPER4 form a heterotetrameric channel. The auxiliary CATSPERB, CATSPERG, CATSPERD and CATSPERE subunits form a pavilion-like structure over the pore which stabilizes the complex through interactions with CATSPER4, CATSPER3, CATSPER1 and CATSPER2 respectively. SLCO6C1 interacts with CATSPERE and TMEM262/CATSPERH interacts with CATSPERB, further stabilizing the complex. C2CD6/CATSPERT interacts at least with CATSPERD and is required for targeting the CatSper complex in the flagellar membrane. Expressed in testis (at protein level).

Its subcellular location is the cell projection. The protein resides in the cilium. It is found in the flagellum membrane. Its function is as follows. Auxiliary component of the CatSper complex, a complex involved in sperm cell hyperactivation. Sperm cell hyperactivation is needed for sperm motility which is essential late in the preparation of sperm for fertilization. Required for CatSper complex targeting and trafficking into the quadrilinear nanodomains. Targets the preassembled CatSper complexes to elongating flagella, where it links the channel-carrying vesicles and motor proteins. This is Cation channel sperm-associated targeting subunit tau from Homo sapiens (Human).